The following is a 483-amino-acid chain: Glutamyl-tRNA(Gln) amidotransferase subunit A (483 aa).

Residues K75 and S150 each act as charge relay system in the active site. S174 serves as the catalytic Acyl-ester intermediate.

It belongs to the amidase family. GatA subfamily. As to quaternary structure, heterotrimer of A, B and C subunits.

The catalysed reaction is L-glutamyl-tRNA(Gln) + L-glutamine + ATP + H2O = L-glutaminyl-tRNA(Gln) + L-glutamate + ADP + phosphate + H(+). Allows the formation of correctly charged Gln-tRNA(Gln) through the transamidation of misacylated Glu-tRNA(Gln) in organisms which lack glutaminyl-tRNA synthetase. The reaction takes place in the presence of glutamine and ATP through an activated gamma-phospho-Glu-tRNA(Gln). The protein is Glutamyl-tRNA(Gln) amidotransferase subunit A of Legionella pneumophila (strain Corby).